Reading from the N-terminus, the 188-residue chain is Elongation factor P (188 aa).

Belongs to the elongation factor P family.

The protein resides in the cytoplasm. The protein operates within protein biosynthesis; polypeptide chain elongation. Its function is as follows. Involved in peptide bond synthesis. Stimulates efficient translation and peptide-bond synthesis on native or reconstituted 70S ribosomes in vitro. Probably functions indirectly by altering the affinity of the ribosome for aminoacyl-tRNA, thus increasing their reactivity as acceptors for peptidyl transferase. The protein is Elongation factor P of Chlorobaculum parvum (strain DSM 263 / NCIMB 8327) (Chlorobium vibrioforme subsp. thiosulfatophilum).